A 404-amino-acid polypeptide reads, in one-letter code: Acetylornithine/succinyldiaminopimelate aminotransferase (404 aa).

Pyridoxal 5'-phosphate-binding positions include 108–109 (GA) and Phe141. Arg144 lines the N(2)-acetyl-L-ornithine pocket. 226–229 (DEIQ) contacts pyridoxal 5'-phosphate. The residue at position 255 (Lys255) is an N6-(pyridoxal phosphate)lysine. Position 283 (Thr283) interacts with N(2)-acetyl-L-ornithine. Thr284 contacts pyridoxal 5'-phosphate.

The protein belongs to the class-III pyridoxal-phosphate-dependent aminotransferase family. ArgD subfamily. Homodimer. Pyridoxal 5'-phosphate is required as a cofactor.

It is found in the cytoplasm. The catalysed reaction is N(2)-acetyl-L-ornithine + 2-oxoglutarate = N-acetyl-L-glutamate 5-semialdehyde + L-glutamate. It catalyses the reaction N-succinyl-(2S,6S)-2,6-diaminopimelate + 2-oxoglutarate = (S)-2-succinylamino-6-oxoheptanedioate + L-glutamate. It functions in the pathway amino-acid biosynthesis; L-arginine biosynthesis; N(2)-acetyl-L-ornithine from L-glutamate: step 4/4. The protein operates within amino-acid biosynthesis; L-lysine biosynthesis via DAP pathway; LL-2,6-diaminopimelate from (S)-tetrahydrodipicolinate (succinylase route): step 2/3. In terms of biological role, involved in both the arginine and lysine biosynthetic pathways. This chain is Acetylornithine/succinyldiaminopimelate aminotransferase, found in Buchnera aphidicola subsp. Schizaphis graminum (strain Sg).